A 419-amino-acid polypeptide reads, in one-letter code: Tryptophan synthase beta chain (419 aa).

N6-(pyridoxal phosphate)lysine is present on Lys-113.

This sequence belongs to the TrpB family. As to quaternary structure, tetramer of two alpha and two beta chains. Requires pyridoxal 5'-phosphate as cofactor.

It carries out the reaction (1S,2R)-1-C-(indol-3-yl)glycerol 3-phosphate + L-serine = D-glyceraldehyde 3-phosphate + L-tryptophan + H2O. It participates in amino-acid biosynthesis; L-tryptophan biosynthesis; L-tryptophan from chorismate: step 5/5. The beta subunit is responsible for the synthesis of L-tryptophan from indole and L-serine. The sequence is that of Tryptophan synthase beta chain from Picrophilus torridus (strain ATCC 700027 / DSM 9790 / JCM 10055 / NBRC 100828 / KAW 2/3).